Here is a 439-residue protein sequence, read N- to C-terminus: ATP-dependent protease ATPase subunit HslU (439 aa).

Residues I17, 59-64 (GVGKTE), D251, E317, and R389 contribute to the ATP site.

The protein belongs to the ClpX chaperone family. HslU subfamily. A double ring-shaped homohexamer of HslV is capped on each side by a ring-shaped HslU homohexamer. The assembly of the HslU/HslV complex is dependent on binding of ATP.

It localises to the cytoplasm. ATPase subunit of a proteasome-like degradation complex; this subunit has chaperone activity. The binding of ATP and its subsequent hydrolysis by HslU are essential for unfolding of protein substrates subsequently hydrolyzed by HslV. HslU recognizes the N-terminal part of its protein substrates and unfolds these before they are guided to HslV for hydrolysis. In Campylobacter jejuni subsp. doylei (strain ATCC BAA-1458 / RM4099 / 269.97), this protein is ATP-dependent protease ATPase subunit HslU.